A 296-amino-acid polypeptide reads, in one-letter code: Zinc finger CCCH-type antiviral protein 1-like (296 aa).

A2 carries the N-acetylalanine modification. 2 consecutive C3H1-type zinc fingers follow at residues L111–H136 and V198–I219.

The sequence is that of Zinc finger CCCH-type antiviral protein 1-like (Zc3hav1l) from Mus musculus (Mouse).